A 405-amino-acid chain; its full sequence is Tryptophan synthase beta chain (405 aa).

At Lys96 the chain carries N6-(pyridoxal phosphate)lysine.

This sequence belongs to the TrpB family. In terms of assembly, tetramer of two alpha and two beta chains. Pyridoxal 5'-phosphate is required as a cofactor.

It catalyses the reaction (1S,2R)-1-C-(indol-3-yl)glycerol 3-phosphate + L-serine = D-glyceraldehyde 3-phosphate + L-tryptophan + H2O. Its pathway is amino-acid biosynthesis; L-tryptophan biosynthesis; L-tryptophan from chorismate: step 5/5. In terms of biological role, the beta subunit is responsible for the synthesis of L-tryptophan from indole and L-serine. In Clostridium botulinum (strain Alaska E43 / Type E3), this protein is Tryptophan synthase beta chain.